The following is a 134-amino-acid chain: Profilin-3 (134 aa).

C13 and C118 form a disulfide bridge. An Involved in PIP2 interaction motif is present at residues 84-100; it reads AVIRGKKGSGGITIKKT. At T114 the chain carries Phosphothreonine.

It belongs to the profilin family. As to quaternary structure, occurs in many kinds of cells as a complex with monomeric actin in a 1:1 ratio. Post-translationally, phosphorylated by MAP kinases.

The protein resides in the cytoplasm. It is found in the cytoskeleton. Binds to actin and affects the structure of the cytoskeleton. At high concentrations, profilin prevents the polymerization of actin, whereas it enhances it at low concentrations. This is Profilin-3 from Olea europaea (Common olive).